Consider the following 211-residue polypeptide: MTSQRTRERLIQRLYEEGLSNAHVLEVIRRTPRHLFVDEALSHRAYEDTALPIGHNQTISQPFMVARMTELLLAAGPLDKVMEIGTGSGYQTAVLAQLVERVFSVERIQALQDKAKERLAELNLRNVVFRWGDGWEGWSALAPYNGIIVTAAATEVPQSLLDQLAPGGRLVIPVGGGEVQQLMLIVRTEDGFSRQVLDSVRFVPLLNGPIA.

The active site involves serine 60.

This sequence belongs to the methyltransferase superfamily. L-isoaspartyl/D-aspartyl protein methyltransferase family.

Its subcellular location is the cytoplasm. It carries out the reaction [protein]-L-isoaspartate + S-adenosyl-L-methionine = [protein]-L-isoaspartate alpha-methyl ester + S-adenosyl-L-homocysteine. Its function is as follows. Catalyzes the methyl esterification of L-isoaspartyl residues in peptides and proteins that result from spontaneous decomposition of normal L-aspartyl and L-asparaginyl residues. It plays a role in the repair and/or degradation of damaged proteins. In Pseudomonas aeruginosa (strain LESB58), this protein is Protein-L-isoaspartate O-methyltransferase.